Here is a 496-residue protein sequence, read N- to C-terminus: UDP-N-acetylmuramate--L-alanine ligase (496 aa).

Position 122–128 (122–128 (GTHGKTT)) interacts with ATP.

Belongs to the MurCDEF family.

Its subcellular location is the cytoplasm. It catalyses the reaction UDP-N-acetyl-alpha-D-muramate + L-alanine + ATP = UDP-N-acetyl-alpha-D-muramoyl-L-alanine + ADP + phosphate + H(+). Its pathway is cell wall biogenesis; peptidoglycan biosynthesis. In terms of biological role, cell wall formation. The chain is UDP-N-acetylmuramate--L-alanine ligase from Mycobacterium avium (strain 104).